A 439-amino-acid chain; its full sequence is ATP-dependent protease ATPase subunit HslU (439 aa).

ATP contacts are provided by residues isoleucine 17, 59 to 64, aspartate 251, glutamate 317, and arginine 389; that span reads GVGKTE.

This sequence belongs to the ClpX chaperone family. HslU subfamily. In terms of assembly, a double ring-shaped homohexamer of HslV is capped on each side by a ring-shaped HslU homohexamer. The assembly of the HslU/HslV complex is dependent on binding of ATP.

Its subcellular location is the cytoplasm. Its function is as follows. ATPase subunit of a proteasome-like degradation complex; this subunit has chaperone activity. The binding of ATP and its subsequent hydrolysis by HslU are essential for unfolding of protein substrates subsequently hydrolyzed by HslV. HslU recognizes the N-terminal part of its protein substrates and unfolds these before they are guided to HslV for hydrolysis. The polypeptide is ATP-dependent protease ATPase subunit HslU (Campylobacter jejuni (strain RM1221)).